Consider the following 188-residue polypeptide: Elongation factor P-like protein (188 aa).

This sequence belongs to the elongation factor P family.

This is Elongation factor P-like protein from Xanthomonas axonopodis pv. citri (strain 306).